The primary structure comprises 555 residues: Glutamine--tRNA ligase (555 aa).

The 'HIGH' region motif lies at 34–44 (PEPNGYLHIGH). ATP contacts are provided by residues 35-37 (EPN) and 41-47 (HIGHAKS). D67 and Y212 together coordinate L-glutamine. ATP contacts are provided by residues T231, 261-262 (RL), and 269-271 (MSK). The 'KMSKS' region motif lies at 268 to 272 (VMSKR). Residues 317-324 (TKQDNTIE) are interaction with tRNA.

The protein belongs to the class-I aminoacyl-tRNA synthetase family. In terms of assembly, monomer.

The protein localises to the cytoplasm. The catalysed reaction is tRNA(Gln) + L-glutamine + ATP = L-glutaminyl-tRNA(Gln) + AMP + diphosphate. The polypeptide is Glutamine--tRNA ligase (Citrobacter koseri (strain ATCC BAA-895 / CDC 4225-83 / SGSC4696)).